The sequence spans 181 residues: Acireductone dioxygenase (181 aa).

4 residues coordinate Fe(2+): His-98, His-100, Glu-104, and His-142. Residues His-98, His-100, Glu-104, and His-142 each contribute to the Ni(2+) site.

It belongs to the acireductone dioxygenase (ARD) family. Monomer. The cofactor is Fe(2+). Ni(2+) serves as cofactor.

It catalyses the reaction 1,2-dihydroxy-5-(methylsulfanyl)pent-1-en-3-one + O2 = 3-(methylsulfanyl)propanoate + CO + formate + 2 H(+). It carries out the reaction 1,2-dihydroxy-5-(methylsulfanyl)pent-1-en-3-one + O2 = 4-methylsulfanyl-2-oxobutanoate + formate + 2 H(+). It participates in amino-acid biosynthesis; L-methionine biosynthesis via salvage pathway; L-methionine from S-methyl-5-thio-alpha-D-ribose 1-phosphate: step 5/6. Functionally, catalyzes 2 different reactions between oxygen and the acireductone 1,2-dihydroxy-3-keto-5-methylthiopentene (DHK-MTPene) depending upon the metal bound in the active site. Fe-containing acireductone dioxygenase (Fe-ARD) produces formate and 2-keto-4-methylthiobutyrate (KMTB), the alpha-ketoacid precursor of methionine in the methionine recycle pathway. Ni-containing acireductone dioxygenase (Ni-ARD) produces methylthiopropionate, carbon monoxide and formate, and does not lie on the methionine recycle pathway. The sequence is that of Acireductone dioxygenase from Alcanivorax borkumensis (strain ATCC 700651 / DSM 11573 / NCIMB 13689 / SK2).